The sequence spans 836 residues: Sucrose synthase 5 (836 aa).

Positions 270-748 are GT-B glycosyltransferase; it reads RIFNVVIFSV…GLQRINECYT (479 aa). The tract at residues 805–836 is disordered; sequence PPPLPPKPLVKPSASKGSKRTQPRLSFRLFGA.

The protein belongs to the glycosyltransferase 1 family. Plant sucrose synthase subfamily. In terms of tissue distribution, detected in the whole plant but more precisely confined to the vasculature in cotyledons, leaves, petals, anthers and roots. Also detected in developing siliques, young immature rosette and cauline leaves.

It localises to the secreted. The protein resides in the cell wall. The catalysed reaction is an NDP-alpha-D-glucose + D-fructose = a ribonucleoside 5'-diphosphate + sucrose + H(+). In terms of biological role, sucrose-cleaving enzyme that provides UDP-glucose and fructose for various metabolic pathways. Functions in callose synthesis at the site of phloem sieve elements. The sequence is that of Sucrose synthase 5 (SUS5) from Arabidopsis thaliana (Mouse-ear cress).